Reading from the N-terminus, the 425-residue chain is MGNRIGGRRKAGVEERYTRPQGLYEHRDIDQKKLRKLILEAKLAPCYMGADDAAAAADLEECPICFLYYPSLNRSKCCSKGICTECFLQMKPTHTAQPTQCPFCKTPSYAVEYRGVKTKEERSIEQFEEQKVIEAQMRMRQQALQDEEDKMKRKQNRCSSSRTITPTKEVEYRDICSTSFSVPSYRCAEQETECCSSEPSCSAQTSMRPFHSRHNRDDNIDMNIEDMMVMEAIWRSIQEQGSIGNPVCGNFMPVTEPSPRERQPFVPAASLEIPHGGGFSCAVAAMAEHQPPSMDFSYMAGSSAFPVFDMFRRPCNIAGGSMCNLESSPESWSGIAPSCSREVVREEGECSADHWSEGAEAGTSYAGSDIVADAGTMPQLPFAENFAMAPSHFRPESIEEQMMFSMALSLADGHGRTHSQGLAWL.

An RING-type; degenerate zinc finger spans residues 62–105; it reads CPICFLYYPSLNRSKCCSKGICTECFLQMKPTHTAQPTQCPFCK.

In terms of tissue distribution, expressed in roots, shoots, leaves, inflorescence meristems, stamens, pistils, spikelet hulls and endosperms 4 days after fertilization.

Its subcellular location is the cytoplasm. The catalysed reaction is S-ubiquitinyl-[E2 ubiquitin-conjugating enzyme]-L-cysteine + [acceptor protein]-L-lysine = [E2 ubiquitin-conjugating enzyme]-L-cysteine + N(6)-ubiquitinyl-[acceptor protein]-L-lysine.. It functions in the pathway protein modification; protein ubiquitination. Its function is as follows. E3 ubiquitin-protein ligase involved in the regulation of grain size. May limit grain width and weight by restricting cell proliferation of the spikelet hull. Possesses E3 ubiquitin-protein ligase activity in vitro. The protein is E3 ubiquitin-protein ligase GW2 of Oryza sativa subsp. indica (Rice).